A 289-amino-acid polypeptide reads, in one-letter code: ATP synthase gamma chain (289 aa).

This sequence belongs to the ATPase gamma chain family. In terms of assembly, F-type ATPases have 2 components, CF(1) - the catalytic core - and CF(0) - the membrane proton channel. CF(1) has five subunits: alpha(3), beta(3), gamma(1), delta(1), epsilon(1). CF(0) has three main subunits: a, b and c.

It is found in the cell inner membrane. In terms of biological role, produces ATP from ADP in the presence of a proton gradient across the membrane. The gamma chain is believed to be important in regulating ATPase activity and the flow of protons through the CF(0) complex. In Polynucleobacter asymbioticus (strain DSM 18221 / CIP 109841 / QLW-P1DMWA-1) (Polynucleobacter necessarius subsp. asymbioticus), this protein is ATP synthase gamma chain.